Reading from the N-terminus, the 37-residue chain is U12-myrmicitoxin-Mri1a (37 aa).

The signal sequence occupies residues 1–23 (MKTIELITIFAMITTLMVTVVAG). Positions 24–25 (DP) are excised as a propeptide. The residue at position 35 (valine 35) is a Valine amide.

Expressed by the venom gland.

It is found in the secreted. In terms of biological role, toxin that induces mild paralysis, and reduces survival and reproduction when injected into aphids (A.pisum). May affect various processes in the aphid, including wound healing and hemolymph coagulation. It does not increase the sensitivity of the aphids to the chemical insecticides imidacloprid, methomyl and Spirotetramat. Has no insecticidal activity when injected into blowfly (L.caesar). Does not display any antibacterial or antifungal activity. The sequence is that of U12-myrmicitoxin-Mri1a from Manica rubida (European giant red ant).